Here is a 305-residue protein sequence, read N- to C-terminus: Axin interactor, dorsalization-associated protein A (305 aa).

The tract at residues 153–220 is axin-binding; it reads GTLLPRLPSE…RKEDTYVHFN (68 aa). Positions 156-303 constitute a C2 Aida-type domain; that stretch reads LPRLPSEPGM…LYLHLLQTLL (148 aa).

Belongs to the AIDA family.

In terms of biological role, acts as a ventralizing factor during embryogenesis. Inhibits axin-mediated JNK activation by binding axin and disrupting axin homodimerization. This in turn antagonizes a Wnt/beta-catenin-independent dorsalization pathway activated by axin/JNK-signaling. The sequence is that of Axin interactor, dorsalization-associated protein A (aida-a) from Xenopus laevis (African clawed frog).